We begin with the raw amino-acid sequence, 289 residues long: NAD(P)H-hydrate epimerase (289 aa).

The region spanning 71-277 is the YjeF N-terminal domain; that stretch reads AQTIDNELMS…SIVEKYNLKI (207 aa). Residue 122-126 participates in (6S)-NADPHX binding; it reads NNGGD. K(+)-binding residues include Asn123 and Asp185. (6S)-NADPHX contacts are provided by residues 189–195 and Asp218; that span reads GFSFRGE. Ser221 is a K(+) binding site.

Belongs to the NnrE/AIBP family. Requires K(+) as cofactor.

The enzyme catalyses (6R)-NADHX = (6S)-NADHX. It catalyses the reaction (6R)-NADPHX = (6S)-NADPHX. In terms of biological role, catalyzes the epimerization of the S- and R-forms of NAD(P)HX, a damaged form of NAD(P)H that is a result of enzymatic or heat-dependent hydration. This is a prerequisite for the S-specific NAD(P)H-hydrate dehydratase to allow the repair of both epimers of NAD(P)HX. In Plasmodium knowlesi (strain H), this protein is NAD(P)H-hydrate epimerase.